The chain runs to 329 residues: GTP 3',8-cyclase (329 aa).

The Radical SAM core domain occupies 8 to 234 (AFARKFYYLR…QLRQRSDGPA (227 aa)). Arg-17 is a GTP binding site. 2 residues coordinate [4Fe-4S] cluster: Cys-24 and Cys-28. Tyr-30 is a binding site for S-adenosyl-L-methionine. Residue Cys-31 participates in [4Fe-4S] cluster binding. Arg-68 lines the GTP pocket. Gly-72 contacts S-adenosyl-L-methionine. GTP is bound at residue Thr-99. Residue Ser-123 participates in S-adenosyl-L-methionine binding. Lys-160 lines the GTP pocket. Met-194 is an S-adenosyl-L-methionine binding site. [4Fe-4S] cluster-binding residues include Cys-257 and Cys-260. Position 262–264 (262–264 (RLR)) interacts with GTP. Cys-274 contributes to the [4Fe-4S] cluster binding site.

This sequence belongs to the radical SAM superfamily. MoaA family. Monomer and homodimer. Requires [4Fe-4S] cluster as cofactor.

The enzyme catalyses GTP + AH2 + S-adenosyl-L-methionine = (8S)-3',8-cyclo-7,8-dihydroguanosine 5'-triphosphate + 5'-deoxyadenosine + L-methionine + A + H(+). Its pathway is cofactor biosynthesis; molybdopterin biosynthesis. Functionally, catalyzes the cyclization of GTP to (8S)-3',8-cyclo-7,8-dihydroguanosine 5'-triphosphate. The sequence is that of GTP 3',8-cyclase from Salmonella heidelberg (strain SL476).